The sequence spans 1953 residues: Protein BNI1 (1953 aa).

Disordered regions lie at residues 1–152 (MLKN…ASSL), 230–258 (MRANTTSSSTASRTSMASDHHPILTANSS), 263–282 (KSVLMTSASSPTSTVYSNSL), and 287–306 (TLSSVGTSTSKGKKLVSGSL). Low complexity predominate over residues 31–40 (ANSNATNSNT). Polar residues-rich tracts occupy residues 41-100 (GSPT…SQYM) and 110-143 (VSSQHARSHSMQSKYSYSKRNSSQASNKLTRQHT). The GBD/FH3 domain maps to 174 to 696 (EMPSDPYEVE…NVSVASTSDE (523 aa)). Residues 232–246 (ANTTSSSTASRTSMA) are compositionally biased toward low complexity. The segment covering 263–278 (KSVLMTSASSPTSTVY) has biased composition (polar residues). A phosphoserine mark is found at serine 311 and serine 325. The interval 312-337 (LNNIYRGGAENNTSASTLPGDRTNRP) is disordered. 3 coiled-coil regions span residues 712–807 (QTDE…TILN), 864–894 (NKRLKMLRMQMENIENEARQLEMTNFAEFEK), and 928–981 (NKLN…YKGF). 3 disordered regions span residues 990 to 1014 (IMDSPKKNTGDVETEEDANYASLDP), 1040 to 1094 (HEIQ…LDAL), and 1149 to 1330 (TQKV…MPAS). The 285-residue stretch at 1053–1337 (SSSSSDDESE…PASQIKSAVT (285 aa)) folds into the FH1 domain. Phosphoserine occurs at positions 1085 and 1170. Residues 1184–1211 (DKAEKDMRQHVENGKQGRVVNHEEDKTA) are compositionally biased toward basic and acidic residues. Polar residues predominate over residues 1217–1237 (SKLNNTDGAEDLSTQSSVLSS). A compositionally biased stretch (pro residues) spans 1238-1250 (QPPPPPPPPPPVP). The span at 1257–1270 (SLEKEKKSEDDTVK) shows a compositional bias: basic and acidic residues. Over residues 1278-1292 (PAPPPPPPPPPPPPM) the composition is skewed to pro residues. Residues serine 1338 and serine 1344 each carry the phosphoserine modification. Residues 1348–1766 (FEKYPRPHKK…YIKHKKIVEE (419 aa)) form the FH2 domain. Residues 1732–1811 (KFADFINEYK…DKLLEQLKNA (80 aa)) are a coiled coil. Over residues 1768–1779 (QKRAQEKEKQKE) the composition is skewed to basic and acidic residues. 3 disordered regions span residues 1768 to 1797 (QKRAQEKEKQKENSNSPSSEGNEEDEAEDR), 1809 to 1844 (KNAGPAKSDPSSARKRALVRKKYLSEKDNAPQLLND), and 1872 to 1899 (PTPLATRGVMNTSEDLPSPSKTSALEDQ). Positions 1792 to 1826 (DEAEDRRAVMDKLLEQLKNAGPAKSDPSSARKRAL) constitute a DAD domain. Positions 1821-1830 (ARKRALVRKK) are enriched in basic residues. The segment covering 1880-1896 (VMNTSEDLPSPSKTSAL) has biased composition (polar residues). Phosphothreonine is present on threonine 1918.

It belongs to the formin homology family. BNI1 subfamily. As to quaternary structure, homodimer, and possibly also homotetramer. Interacts with PFY1 via the FH1 domain and with actin via the FH2 domain.

It localises to the cell membrane. The protein resides in the cell projection. The protein localises to the ruffle membrane. It is found in the cytoplasm. Its subcellular location is the cytoskeleton. Functionally, required for the assembly of F-actin structures, such as actin cables and stress fibers. Nucleates actin filaments. Binds to the barbed end of the actin filament and acts as a leaky capper, slowing both polymerization and depolymerization. Protects the growing actin fiber from tight capping proteins and so increases the time of elongation and the total amount of F-actin. May organize microtubules by mediating spindle positioning and movement in the budding process. Potential target of the RHO family members. This is Protein BNI1 (BNI1) from Saccharomyces cerevisiae (strain ATCC 204508 / S288c) (Baker's yeast).